The chain runs to 535 residues: Light-independent protochlorophyllide reductase subunit B (535 aa).

D36 lines the [4Fe-4S] cluster pocket. The active-site Proton donor is the D292. 428-429 provides a ligand contact to substrate; it reads GL. A disordered region spans residues 446–483; the sequence is DEASPSESAPHASNGHEDVAGGSTAQSVPSHAATEGDG.

It belongs to the ChlB/BchB/BchZ family. In terms of assembly, protochlorophyllide reductase is composed of three subunits; BchL, BchN and BchB. Forms a heterotetramer of two BchB and two BchN subunits. [4Fe-4S] cluster serves as cofactor.

It catalyses the reaction chlorophyllide a + oxidized 2[4Fe-4S]-[ferredoxin] + 2 ADP + 2 phosphate = protochlorophyllide a + reduced 2[4Fe-4S]-[ferredoxin] + 2 ATP + 2 H2O. It participates in porphyrin-containing compound metabolism; bacteriochlorophyll biosynthesis (light-independent). Component of the dark-operative protochlorophyllide reductase (DPOR) that uses Mg-ATP and reduced ferredoxin to reduce ring D of protochlorophyllide (Pchlide) to form chlorophyllide a (Chlide). This reaction is light-independent. The NB-protein (BchN-BchB) is the catalytic component of the complex. This chain is Light-independent protochlorophyllide reductase subunit B, found in Chlorobium limicola (strain DSM 245 / NBRC 103803 / 6330).